An 890-amino-acid chain; its full sequence is DNA mismatch repair protein MutS (890 aa).

ATP is bound at residue 607–614; sequence GPNMSGKS. The tract at residues 832–851 is disordered; sequence ESQLSFFGGEQSSKKQDKPL.

This sequence belongs to the DNA mismatch repair MutS family.

Functionally, this protein is involved in the repair of mismatches in DNA. It is possible that it carries out the mismatch recognition step. This protein has a weak ATPase activity. This chain is DNA mismatch repair protein MutS, found in Bacillus cereus (strain B4264).